The primary structure comprises 329 residues: GTP 3',8-cyclase (329 aa).

Residues 8–234 enclose the Radical SAM core domain; the sequence is AFARKFYYLR…QIRQRSDGPA (227 aa). Residue Arg17 participates in GTP binding. Residues Cys24 and Cys28 each contribute to the [4Fe-4S] cluster site. Tyr30 serves as a coordination point for S-adenosyl-L-methionine. Cys31 contacts [4Fe-4S] cluster. Arg68 provides a ligand contact to GTP. Gly72 is an S-adenosyl-L-methionine binding site. Position 99 (Thr99) interacts with GTP. Residue Ser123 participates in S-adenosyl-L-methionine binding. Lys160 is a GTP binding site. Met194 contributes to the S-adenosyl-L-methionine binding site. [4Fe-4S] cluster is bound by residues Cys257 and Cys260. 262-264 is a binding site for GTP; that stretch reads RLR. Cys274 is a [4Fe-4S] cluster binding site.

Belongs to the radical SAM superfamily. MoaA family. In terms of assembly, monomer and homodimer. [4Fe-4S] cluster is required as a cofactor.

It catalyses the reaction GTP + AH2 + S-adenosyl-L-methionine = (8S)-3',8-cyclo-7,8-dihydroguanosine 5'-triphosphate + 5'-deoxyadenosine + L-methionine + A + H(+). It functions in the pathway cofactor biosynthesis; molybdopterin biosynthesis. Functionally, catalyzes the cyclization of GTP to (8S)-3',8-cyclo-7,8-dihydroguanosine 5'-triphosphate. The sequence is that of GTP 3',8-cyclase from Klebsiella pneumoniae subsp. pneumoniae (strain ATCC 700721 / MGH 78578).